Here is a 68-residue protein sequence, read N- to C-terminus: Guanine nucleotide-binding protein G(I)/G(S)/G(O) subunit gamma-5B (68 aa).

The region spanning 3 to 68 (GFSSVAATKK…FRPQKVCSFL (66 aa)) is the G protein gamma domain. Cys65 is modified (cysteine methyl ester). Cys65 carries S-geranylgeranyl cysteine lipidation. Positions 66 to 68 (SFL) are cleaved as a propeptide — removed in mature form.

This sequence belongs to the G protein gamma family. G proteins are composed of 3 units; alpha, beta and gamma.

The protein localises to the cell membrane. Functionally, guanine nucleotide-binding proteins (G proteins) are involved as a modulator or transducer in various transmembrane signaling systems. The beta and gamma chains are required for the GTPase activity, for replacement of GDP by GTP, and for G protein-effector interaction. In Homo sapiens (Human), this protein is Guanine nucleotide-binding protein G(I)/G(S)/G(O) subunit gamma-5B.